A 275-amino-acid polypeptide reads, in one-letter code: Phosphatidylglycerol--prolipoprotein diacylglyceryl transferase (275 aa).

Helical transmembrane passes span 20–40 (FTIH…LLLA), 58–78 (LLWA…VFQW), 88–108 (IIAI…GFIV), and 118–138 (LSSW…QGIG). Arginine 139 provides a ligand contact to a 1,2-diacyl-sn-glycero-3-phospho-(1'-sn-glycerol). The next 2 helical transmembrane spans lie at 209–229 (GEIF…IEGM) and 239–259 (IRIS…ILII).

It belongs to the Lgt family.

The protein resides in the cell membrane. It carries out the reaction L-cysteinyl-[prolipoprotein] + a 1,2-diacyl-sn-glycero-3-phospho-(1'-sn-glycerol) = an S-1,2-diacyl-sn-glyceryl-L-cysteinyl-[prolipoprotein] + sn-glycerol 1-phosphate + H(+). The protein operates within protein modification; lipoprotein biosynthesis (diacylglyceryl transfer). Catalyzes the transfer of the diacylglyceryl group from phosphatidylglycerol to the sulfhydryl group of the N-terminal cysteine of a prolipoprotein, the first step in the formation of mature lipoproteins. In Limosilactobacillus reuteri (strain DSM 20016) (Lactobacillus reuteri), this protein is Phosphatidylglycerol--prolipoprotein diacylglyceryl transferase.